The primary structure comprises 257 residues: 1-(5-phosphoribosyl)-5-[(5-phosphoribosylamino)methylideneamino] imidazole-4-carboxamide isomerase (257 aa).

The active-site Proton acceptor is D8. D129 functions as the Proton donor in the catalytic mechanism.

Belongs to the HisA/HisF family.

Its subcellular location is the cytoplasm. The enzyme catalyses 1-(5-phospho-beta-D-ribosyl)-5-[(5-phospho-beta-D-ribosylamino)methylideneamino]imidazole-4-carboxamide = 5-[(5-phospho-1-deoxy-D-ribulos-1-ylimino)methylamino]-1-(5-phospho-beta-D-ribosyl)imidazole-4-carboxamide. The protein operates within amino-acid biosynthesis; L-histidine biosynthesis; L-histidine from 5-phospho-alpha-D-ribose 1-diphosphate: step 4/9. The polypeptide is 1-(5-phosphoribosyl)-5-[(5-phosphoribosylamino)methylideneamino] imidazole-4-carboxamide isomerase (Gloeothece citriformis (strain PCC 7424) (Cyanothece sp. (strain PCC 7424))).